The following is a 212-amino-acid chain: External core antigen (212 aa).

The signal sequence occupies residues 1-19 (MQLFHLCLIISCSCPTVQA). The interval 25–27 (GWL) is HBEAG. Residues 165–212 (NAPILSTLPETTVVRRRGRSPRRRTPSPRRRRSQSPRRRRSQSPASQC) are disordered. Positions 178–205 (VRRRGRSPRRRTPSPRRRRSQSPRRRRS) are enriched in basic residues. The stretch at 184–190 (SPRRRTP) is one 1; half-length repeat. Residues 184–206 (SPRRRTPSPRRRRSQSPRRRRSQ) form a 3 X 8 AA repeats of S-P-R-R-R-R-S-Q region. Positions 184–212 (SPRRRTPSPRRRRSQSPRRRRSQSPASQC) are excised as a propeptide. 2 tandem repeats follow at residues 191-198 (SPRRRRSQ) and 199-206 (SPRRRRSQ).

This sequence belongs to the orthohepadnavirus precore antigen family. Homodimerizes. Phosphorylated. Post-translationally, cleaved by host furin.

The protein resides in the secreted. Its subcellular location is the host nucleus. May regulate immune response to the intracellular capsid in acting as a T-cell tolerogen, by having an immunoregulatory effect which prevents destruction of infected cells by cytotoxic T-cells. This immune regulation may predispose to chronicity during perinatal infections and prevent severe liver injury during adult infections. This is External core antigen from Gibbon hepatitis B virus subtype ayw3q (isolate Hope) (HBVgbn).